We begin with the raw amino-acid sequence, 305 residues long: Alpha-N-acetylgalactosaminide alpha-2,6-sialyltransferase 3 (305 aa).

At 1–8 (MACILKRK) the chain is on the cytoplasmic side. The helical; Signal-anchor for type II membrane protein transmembrane segment at 9-28 (SVIAVSFIAAFLFLLVVRLV) threads the bilayer. The Lumenal portion of the chain corresponds to 29–305 (NEVNFPLLLN…IFTHPNWTLS (277 aa)). C80 and C229 form a disulfide bridge. N-linked (GlcNAc...) asparagine glycans are attached at residues N148, N239, and N301.

Belongs to the glycosyltransferase 29 family. Expressed in brain and kidney. Observed in the epithelium of the proximal tubules, marginal expression was also found in the distal tubules and collecting tubules.

It localises to the golgi apparatus membrane. The enzyme catalyses an alpha-Neu5Ac-(2-&gt;3)-beta-D-Gal-(1-&gt;3)-D-GlcNAc derivative + CMP-N-acetyl-beta-neuraminate = an alpha-Neu5Ac-(2-&gt;3)-beta-D-Gal-(1-&gt;3)-[alpha-Neu5Ac-(2-&gt;6)]-D-GlcNAc derivative + CMP + H(+). It catalyses the reaction a ganglioside GM1b (d18:1(4E)) + CMP-N-acetyl-beta-neuraminate = a ganglioside GD1alpha (d18:1(4E)) + CMP + H(+). It carries out the reaction a globoside MSGG + CMP-N-acetyl-beta-neuraminate = a globoside DSGG + CMP + H(+). The catalysed reaction is 3-O-[alpha-Neu5Ac-(2-&gt;3)-beta-D-Gal-(1-&gt;3)-alpha-D-GalNAc]-L-Ser-[protein] + CMP-N-acetyl-beta-neuraminate = a 3-O-{alpha-Neu5Ac-(2-&gt;3)-beta-D-Gal-(1-&gt;3)-[alpha-Neu5Ac-(2-&gt;6)]-alpha-D-GalNAc}-L-seryl-[protein] + CMP + H(+). The enzyme catalyses 3-O-[alpha-Neu5Ac-(2-&gt;3)-beta-D-Gal-(1-&gt;3)-alpha-D-GalNAc]-L-Thr-[protein] + CMP-N-acetyl-beta-neuraminate = a 3-O-{alpha-Neu5Ac-(2-&gt;3)-beta-D-Gal-(1-&gt;3)-[alpha-Neu5Ac-(2-&gt;6)]-alpha-D-GalNAc}-L-threonyl-[protein] + CMP + H(+). It functions in the pathway protein modification; protein glycosylation. Its pathway is glycolipid biosynthesis. Its function is as follows. Transfers the sialyl group (N-acetyl-alpha-neuraminyl or NeuAc) from CMP-NeuAc to the GalNAc residue on the NeuAc-alpha-2,3-Gal-beta-1,3-GalNAc sequence of glycoproteins and glycolipids forming an alpha-2,6-linkage. Produces branched type disialyl structures by transfer of a sialyl group onto a GalNAc residue inside the backbone core chains. ST6GalNAcIII prefers glycolipids to glycoproteins, predominantly catalyzing the biosynthesis of ganglioside GD1alpha from GM1b. GD1alpha is a critical molecule in the communication and interaction between neuronal cells and their supportive cells, particularly in brain tissues, and functions as an adhesion molecule in the process of metastasis. Sialylation of glycoproteins or glycosphingolipids is very important in tumor development, neuronal development, nerve repair, immunological processes and regulation of hormone sensitivity. In Homo sapiens (Human), this protein is Alpha-N-acetylgalactosaminide alpha-2,6-sialyltransferase 3 (ST6GALNAC3).